An 87-amino-acid polypeptide reads, in one-letter code: Keratin-associated protein 19-1 (87 aa).

The segment at 6 to 72 (GYSGGLGYGY…SSYGGYGCGC (67 aa)) is 21 X 2 AA repeats of G-[YCGS].

The protein belongs to the KRTAP type 19 family. As to quaternary structure, interacts with hair keratins. In terms of tissue distribution, strong expression in narrowly defined pattern restricted to the lower and middle cortical regions of the hair shaft in both developing and cycling hair. During hair follicle regression (catagen), expression levels decrease until expression is no longer detectable in follicles at resting stage (telogen).

In terms of biological role, in the hair cortex, hair keratin intermediate filaments are embedded in an interfilamentous matrix, consisting of hair keratin-associated proteins (KRTAP), which are essential for the formation of a rigid and resistant hair shaft through their extensive disulfide bond cross-linking with abundant cysteine residues of hair keratins. The matrix proteins include the high-sulfur and high-glycine-tyrosine keratins. This Mus musculus (Mouse) protein is Keratin-associated protein 19-1 (Krtap19-1).